Here is a 115-residue protein sequence, read N- to C-terminus: Protein VCF2 (115 aa).

Positions 1-12 are enriched in basic residues; it reads MGGCPVRKRRRN. The tract at residues 1 to 70 is disordered; it reads MGGCPVRKRR…GPEGNLNQIV (70 aa). The segment covering 33–44 has biased composition (polar residues); sequence FQDSQDTEFSWS.

Belongs to the VCF family.

This is Protein VCF2 from Homo sapiens (Human).